Reading from the N-terminus, the 1178-residue chain is DNA-directed RNA polymerase I subunit 2 (1178 aa).

The segment at Cys1097 to Cys1137 adopts a C4-type zinc-finger fold.

This sequence belongs to the RNA polymerase beta chain family. In terms of assembly, component of the RNA polymerase I (Pol I) complex consisting of at least 13 subunits.

It is found in the nucleus. The catalysed reaction is RNA(n) + a ribonucleoside 5'-triphosphate = RNA(n+1) + diphosphate. DNA-dependent RNA polymerase catalyzes the transcription of DNA into RNA using the four ribonucleoside triphosphates as substrates. Second largest core component of RNA polymerase I which synthesizes ribosomal RNA precursors. Proposed to contribute to the polymerase catalytic activity and forms the polymerase active center together with the largest subunit. Pol I is composed of mobile elements and NRPA2 is part of the core element with the central large cleft and probably a clamp element that moves to open and close the cleft. Functionally, essential for the completion of the three rounds of mitosis in female megaspores required for the development of mature gametophytes. This chain is DNA-directed RNA polymerase I subunit 2, found in Arabidopsis thaliana (Mouse-ear cress).